We begin with the raw amino-acid sequence, 390 residues long: Carbamoyl phosphate synthase small chain (390 aa).

The tract at residues 1 to 198 (MTSTPTPTPT…LGEGYAVGPE (198 aa)) is CPSase. L-glutamine contacts are provided by Ser-53, Gly-250, and Gly-252. A Glutamine amidotransferase type-1 domain is found at 202–390 (RVVVLDYGVK…VGELKGRVEA (189 aa)). Catalysis depends on Cys-279, which acts as the Nucleophile. Residues Leu-280, Gln-283, Asn-321, Gly-323, and Phe-324 each contribute to the L-glutamine site. Catalysis depends on residues His-363 and Glu-365.

This sequence belongs to the CarA family. As to quaternary structure, composed of two chains; the small (or glutamine) chain promotes the hydrolysis of glutamine to ammonia, which is used by the large (or ammonia) chain to synthesize carbamoyl phosphate. Tetramer of heterodimers (alpha,beta)4.

It carries out the reaction hydrogencarbonate + L-glutamine + 2 ATP + H2O = carbamoyl phosphate + L-glutamate + 2 ADP + phosphate + 2 H(+). It catalyses the reaction L-glutamine + H2O = L-glutamate + NH4(+). It participates in amino-acid biosynthesis; L-arginine biosynthesis; carbamoyl phosphate from bicarbonate: step 1/1. It functions in the pathway pyrimidine metabolism; UMP biosynthesis via de novo pathway; (S)-dihydroorotate from bicarbonate: step 1/3. In terms of biological role, small subunit of the glutamine-dependent carbamoyl phosphate synthetase (CPSase). CPSase catalyzes the formation of carbamoyl phosphate from the ammonia moiety of glutamine, carbonate, and phosphate donated by ATP, constituting the first step of 2 biosynthetic pathways, one leading to arginine and/or urea and the other to pyrimidine nucleotides. The small subunit (glutamine amidotransferase) binds and cleaves glutamine to supply the large subunit with the substrate ammonia. The chain is Carbamoyl phosphate synthase small chain from Maricaulis maris (strain MCS10) (Caulobacter maris).